A 20-amino-acid chain; its full sequence is Equinatoxin-1 (20 aa).

A plays an important role in the hemolytic activity region spans residues 3–12 (AVAGAVIEGA). The interval 11–20 (GASLTFNVLQ) is N-terminal region.

Belongs to the actinoporin family. Sea anemone subfamily. Octamer or nonamer in membranes. Monomer in the soluble state.

It is found in the secreted. The protein resides in the nematocyst. It localises to the target cell membrane. Pore-forming protein that forms cations-selective hydrophilic pores of around 1 nm and causes cardiac stimulation and cytolysis. Pore formation is a multi-step process that involves specific recognition of membrane sphingomyelin (but neither cholesterol nor phosphatidylcholine) using aromatic rich region and adjacent phosphocholine (POC) binding site, firm binding to the membrane (mainly driven by hydrophobic interactions) accompanied by the transfer of the N-terminal region to the lipid-water interface and finally pore formation after oligomerization of monomers. Cytolytic effects include red blood cells hemolysis, platelet aggregation and lysis, cytotoxic and cytostatic effects on fibroblasts. Lethality in mammals has been ascribed to severe vasospasm of coronary vessels, cardiac arrhythmia, and inotropic effects. The sequence is that of Equinatoxin-1 from Actinia equina (Beadlet anemone).